Consider the following 827-residue polypeptide: Multiple RNA-binding domain-containing protein 1 (827 aa).

One can recognise an RRM 1 domain in the interval 5–78; sequence SRIFVKNLPP…SRISVDIAKP (74 aa). 3 disordered regions span residues 77 to 116, 176 to 230, and 256 to 299; these read KPIADSKPQHKSPSKGSSKDADPKNAPKVLPPNTKVTAAA, AGLE…ATDD, and AASG…DPES. Acidic residues predominate over residues 179-189; sequence EDGESDDEYED. Composition is skewed to low complexity over residues 208–225 and 256–270; these read APLAASAEPSESAPPVSL and AASGSAAVSVPSTSV. Residues 277 to 288 are compositionally biased toward basic and acidic residues; that stretch reads KPEEHPAEDSRE. RRM domains lie at 308-384, 489-560, 599-682, and 704-781; these read SRLF…PAAA, TTIL…KGPK, SSLF…ASHR, and TKLV…FAQA.

The protein belongs to the RRM MRD1 family.

The protein resides in the nucleus. Functionally, involved in pre-rRNA processing. The chain is Multiple RNA-binding domain-containing protein 1 (mrd-1) from Neurospora crassa (strain ATCC 24698 / 74-OR23-1A / CBS 708.71 / DSM 1257 / FGSC 987).